The chain runs to 202 residues: Small ribosomal subunit protein uS4 (202 aa).

An S4 RNA-binding domain is found at 94–157 (SRLDSLVYRA…LEIPLIKNTL (64 aa)).

This sequence belongs to the universal ribosomal protein uS4 family. Part of the 30S ribosomal subunit. Contacts protein S5. The interaction surface between S4 and S5 is involved in control of translational fidelity.

One of the primary rRNA binding proteins, it binds directly to 16S rRNA where it nucleates assembly of the body of the 30S subunit. Functionally, with S5 and S12 plays an important role in translational accuracy. This chain is Small ribosomal subunit protein uS4, found in Ureaplasma parvum serovar 3 (strain ATCC 27815 / 27 / NCTC 11736).